The sequence spans 271 residues: uncharacterized protein (271 aa).

Residues 77–205 (IIGVYFGDAN…SKELLKKLDV (129 aa)) form the DOD-type homing endonuclease domain.

This is an uncharacterized protein from Methanocaldococcus jannaschii (strain ATCC 43067 / DSM 2661 / JAL-1 / JCM 10045 / NBRC 100440) (Methanococcus jannaschii).